Consider the following 399-residue polypeptide: Phosphoglycerate kinase (399 aa).

Substrate is bound by residues 22–24, Arg37, 60–63, Arg119, and Arg152; these read DLN and HFGR. ATP contacts are provided by residues Lys202, Glu324, and 354–357; that span reads GGDT.

It belongs to the phosphoglycerate kinase family. Monomer.

It localises to the cytoplasm. It catalyses the reaction (2R)-3-phosphoglycerate + ATP = (2R)-3-phospho-glyceroyl phosphate + ADP. It participates in carbohydrate degradation; glycolysis; pyruvate from D-glyceraldehyde 3-phosphate: step 2/5. The sequence is that of Phosphoglycerate kinase from Rhizobium meliloti (strain 1021) (Ensifer meliloti).